The primary structure comprises 187 residues: Adenylate kinase (187 aa).

10-15 (GSGKGT) provides a ligand contact to ATP. The tract at residues 30–59 (STGDMLRAEIAAGTELGKQAKTVMDAGNLV) is NMP. AMP is bound by residues threonine 31, arginine 36, 57–59 (NLV), 85–88 (GYPR), and glutamine 92. Positions 126–136 (GRAKEQGRADD) are LID. Arginine 127 lines the ATP pocket. AMP contacts are provided by arginine 133 and arginine 144. Glycine 172 provides a ligand contact to ATP.

Belongs to the adenylate kinase family. Monomer.

The protein resides in the cytoplasm. It carries out the reaction AMP + ATP = 2 ADP. Its pathway is purine metabolism; AMP biosynthesis via salvage pathway; AMP from ADP: step 1/1. In terms of biological role, catalyzes the reversible transfer of the terminal phosphate group between ATP and AMP. Plays an important role in cellular energy homeostasis and in adenine nucleotide metabolism. The polypeptide is Adenylate kinase (Stenotrophomonas maltophilia (strain K279a)).